A 490-amino-acid polypeptide reads, in one-letter code: Argininosuccinate lyase (490 aa).

Disordered stretches follow at residues 426 to 452 (DPESSVASRDSLGGPAPESMAAALSAA) and 469 to 490 (ALATAADERERVVSSYDSTAPE). Low complexity predominate over residues 440 to 452 (PAPESMAAALSAA). The span at 469 to 480 (ALATAADERERV) shows a compositional bias: basic and acidic residues.

This sequence belongs to the lyase 1 family. Argininosuccinate lyase subfamily.

Its subcellular location is the cytoplasm. The enzyme catalyses 2-(N(omega)-L-arginino)succinate = fumarate + L-arginine. It functions in the pathway amino-acid biosynthesis; L-arginine biosynthesis; L-arginine from L-ornithine and carbamoyl phosphate: step 3/3. This chain is Argininosuccinate lyase, found in Natronomonas pharaonis (strain ATCC 35678 / DSM 2160 / CIP 103997 / JCM 8858 / NBRC 14720 / NCIMB 2260 / Gabara) (Halobacterium pharaonis).